A 186-amino-acid polypeptide reads, in one-letter code: Ribonuclease HII (186 aa).

An RNase H type-2 domain is found at 2 to 186; it reads KILAGVDEVG…KTFSPISDLL (185 aa). 3 residues coordinate a divalent metal cation: Asp-8, Glu-9, and Asp-99.

Belongs to the RNase HII family. Mn(2+) is required as a cofactor. Requires Mg(2+) as cofactor.

It is found in the cytoplasm. It carries out the reaction Endonucleolytic cleavage to 5'-phosphomonoester.. Functionally, endonuclease that specifically degrades the RNA of RNA-DNA hybrids. The polypeptide is Ribonuclease HII (Pelagibacter ubique (strain HTCC1062)).